A 598-amino-acid chain; its full sequence is Peroxisomal targeting signal receptor (598 aa).

Disordered stretches follow at residues 1–54 (MSFM…GEMS), 135–154 (RGGS…MQGG), and 208–237 (AVGK…TTTE). Over residues 9 to 22 (ECSTGRNPLSQFTK) the composition is skewed to polar residues. C10 is covalently cross-linked (Glycyl cysteine thioester (Cys-Gly) (interchain with G-Cter in ubiquitin)). A Glycyl lysine isopeptide (Lys-Gly) (interchain with G-Cter in ubiquitin) cross-link involves residue K22. Positions 23–35 (HTAEDRSLQHDRV) are enriched in basic and acidic residues. Residues 220 to 233 (AETATATETVTETE) show a composition bias toward low complexity. TPR repeat units follow at residues 304–337 (PDPF…NTEH), 338–371 (AEAW…EPGN), 372–409 (LSAL…VVDQ), 410–447 (ARNQ…ANID), 448–481 (ADVQ…RPDD), 482–515 (ALLW…RPSF), and 516–549 (VRAR…HKVE).

The protein belongs to the peroxisomal targeting signal receptor family. In terms of processing, ubiquitination at Cys-10 is UBC4-independent but requires the presence of PEX4. Ubiquitination at Lys-22 is UBC4-dependent.

It is found in the cytoplasm. The protein resides in the peroxisome membrane. Its function is as follows. Binds to the C-terminal PTS1-type tripeptide peroxisomal targeting signal (SKL-type) and plays an essential role in peroxisomal protein import. The sequence is that of Peroxisomal targeting signal receptor (PAY32) from Yarrowia lipolytica (strain CLIB 122 / E 150) (Yeast).